We begin with the raw amino-acid sequence, 342 residues long: MQAWIQQGLHGMQMGGRVGNYDQTFVVYGPVFLPNATQSKISEINYGGKILLPSSALNLLMQYNIPMPMLFKLTNMAVQRVTHCGVLEFSAPEGQAILPLWMMQQLGLDDGDTIRIESATLPKATFAKLKPMSLEFLNITNPKAVLEVELRKYACLTKNDRIPTSYAGQTLEFLVVDLKPANSVCIIECDVNLDFDPPEGYVEQPRQVTPAVTAKPPAPDASAFIGAGQKAGGSGGTGQNATSVFGGAGRRLDGKKKPSSSVSLSDGTGVSTSNAAPVANDLPAIPPVVVNEDYKPGRVSFLRYDYKRVDVLEKELREKEASKAGQPSNVFRGGNRTLRGAR.

2 disordered regions span residues 245-276 and 318-342; these read FGGA…SNAA and EKEA…RGAR. Residues 259 to 275 show a composition bias toward polar residues; it reads SSSVSLSDGTGVSTSNA.

This sequence belongs to the UFD1 family. Forms a complex composed of ubxn-3, ufd-1, npl-4.1 and cdc-48.1; within the complex interacts with cdc-48.1. Interacts with cdc-48.2. Interacts with npl-4.1 and/or npl-4.2.

The protein resides in the cytoplasm. It is found in the nucleus. In terms of biological role, functions at a post-ubiquitination step in the ubiquitin fusion degradation (UFD) pathway. In association with npl-4.1 and/or npl-4.2 and ATPase cdc-48.1 and/or cdc-48.2, involved in the cytoplasmic elimination of misfolded proteins exported from the ER. This pathway, known as ERAD, prevents the activation of the unfolded protein response (UPR) caused by the accumulation of misfolded proteins in the ER. During S phase and in association with npl-4.1 and/or npl-4.2, cdc-48.1 and/or cdc-48.2 and ubxn-3, ensures the degradation of DNA licensing factor cdt-1 after the initiation of DNA replication and thus the disassembly of the DNA replication CMG helicase complex by promoting the dissociation from chromatin of several of its components including cdc-45 and sld-5. Regulates ubxn-3 nuclear localization during S phase. The protein is Ubiquitin fusion degradation protein 1 homolog (ufd-1) of Caenorhabditis elegans.